The sequence spans 138 residues: Vesicle transport protein GOT1B (138 aa).

M1 carries the N-acetylmethionine modification. At 1-9 (MISLTDTQK) the chain is on the cytoplasmic side. The chain crosses the membrane as a helical span at residues 10–30 (IGMGLTGFGVFFLFFGMILFF). Residues 31 to 32 (DK) are Lumenal-facing. Residues 33–53 (ALLAIGNVLFVAGLAFVIGLE) traverse the membrane as a helical segment. Residues 54–68 (RTFRFFFQRHKVKAT) are Cytoplasmic-facing. Position 90 (E90) is a topological domain, lumenal. The helical transmembrane segment at 91 to 109 (IYGFFLLFRGFFPVVVGFI) threads the bilayer. The Cytoplasmic segment spans residues 110–138 (RRVPVLGSLLNLPGIRSFVDKVGESNNMV).

This sequence belongs to the GOT1 family.

It is found in the golgi apparatus membrane. Its function is as follows. May be involved in fusion of ER-derived transport vesicles with the Golgi complex. The sequence is that of Vesicle transport protein GOT1B (Golt1b) from Mus musculus (Mouse).